A 2718-amino-acid polypeptide reads, in one-letter code: E3 SUMO-protein ligase RanBP2 (2718 aa).

Residues 1–100 are sufficient for interaction with Hsp83; it reads MFTTRKEVDA…DPRQSEVVID (100 aa). The segment at 1–200 is sufficient for interaction with piwi; it reads MFTTRKEVDA…EKMKIDQAFN (200 aa). 2 TPR repeats span residues 26–58 and 59–94; these read DIKG…VRDD and AVGH…DPRQ. Disordered stretches follow at residues 796-816 and 937-959; these read QQDR…VHNN and EHQQ…HPVV. Over residues 803–816 the composition is skewed to polar residues; that stretch reads GIDNSFGSPDVHNN. The stretch at 808-809 is repeat 1; sequence FG. The interval 808 to 2581 is 27 X 2 AA repeats of F-G; the sequence is FGSPDVHNNS…GEENETKLFG (1774 aa). Low complexity predominate over residues 938–948; that stretch reads HQQQQQHQQQQ. 3 consecutive repeat copies span residues 1028–1029, 1035–1036, and 1104–1105. The disordered stretch occupies residues 1181–1208; it reads QPVEKEPPANVVITSSDPLPKPTTASVQ. The span at 1192–1208 shows a compositional bias: polar residues; sequence VITSSDPLPKPTTASVQ. Copy 5 of the repeat occupies 1252-1253; that stretch reads FG. 2 disordered regions span residues 1263–1314 and 1483–1502; these read FKTQ…KPII and NKPQ…ATAA. Positions 1284 to 1299 are enriched in polar residues; sequence NQSGATDPNKTLPQDT. A RanBD1 1 domain is found at 1309–1445; that stretch reads DFKPIIPLPD…FTKASEAAKS (137 aa). Residues 1483–1493 are compositionally biased toward polar residues; the sequence is NKPQEQTKTQP. 4 consecutive repeat copies span residues 1506-1507, 1539-1540, 1547-1548, and 1552-1553. Residues 1605 to 1742 enclose the RanBD1 2 domain; that stretch reads QFVPVIALPD…VQKAQQSIGN (138 aa). Residues 1738-1761 are disordered; that stretch reads QSIGNEPKKEEVPSAAGEKEKPIK. Residues 1743 to 1760 show a composition bias toward basic and acidic residues; that stretch reads EPKKEEVPSAAGEKEKPI. The stretch at 1763–1764 is repeat 10; the sequence is FG. The RanBP2-type 1 zinc-finger motif lies at 1770–1799; that stretch reads KAGSWNCQACYTNNGQDQLYCLACQEPKDA. Tandem repeats lie at residues 1826 to 1827, 1842 to 1843, 1874 to 1875, and 1883 to 1884. Residues 1890–1919 form a RanBP2-type 2 zinc finger; sequence AVGSWSCSACYVNNPGESLYCSACDAPKND. 2 tandem repeats follow at residues 1942 to 1943 and 1944 to 1945. Disordered stretches follow at residues 1981 to 2021, 2154 to 2204, and 2239 to 2273; these read FTFS…TYFS, EDSP…THEV, and SLSR…KDAG. Acidic residues predominate over residues 2002 to 2016; it reads EDEDNDSQEVEEEEN. The region spanning 2019 to 2151 is the RanBD1 3 domain; it reads YFSPVIPLPD…IKNALNETAK (133 aa). Residues 2161–2175 are compositionally biased toward polar residues; that stretch reads SVSQSTEANKPSQKN. Positions 2239–2257 are enriched in low complexity; sequence SLSRNNSSASEASKTPSSA. A run of 11 repeats spans residues 2260–2261, 2313–2314, 2332–2333, 2352–2353, 2360–2361, 2366–2367, 2393–2394, 2399–2400, 2415–2416, 2421–2422, and 2580–2581. A disordered region spans residues 2320–2346; sequence AEQQKKDSSESVFGGNKADSQSPATQE. Positions 2556-2699 constitute a RanBD1 4 domain; it reads HYDAIVELPD…VNSCIKRAKA (144 aa).

Belongs to the RanBP2 E3 ligase family. In terms of assembly, part of the nuclear pore complex. Forms a complex with Nxt1, sbr/Nxf1 and RanGAP. Interacts (via TPR repeats) with Hsp83; the interaction is required for the nuclear import of the sesquiterpenoid juvenile hormone receptor Met. Interacts (via N-terminus) with piwi. As to expression, expressed in both oocytes and nurse cells (at protein level).

The protein localises to the nucleus. It localises to the nuclear pore complex. In terms of biological role, E3 SUMO-protein ligase. Component of the nuclear pore complex (NPC), a complex required for trafficking across the nuclear envelope. Required for nuclear import of nuclear localization signal (NLS)-containing proteins in an importin alpha/importin beta-dependent manner, but also for the nuclear import of specific proteins such as phosphorylated Mad or the sesquiterpenoid juvenile hormone receptor Met as part of the juvenile hormone signal transduction pathway. Plays a role in nuclear mRNA export by recruiting the mRNA transport complex composed of Nxt1 and sbr/Nxf1 to the NPC. Essential during germline development for transposon silencing and piRNA biogenesis probably by regulating piwi localization to the nucleus. During oogenesis, required to form granules that modulate the biogenesis of annulate lamellae containing nuclear pore complex components. The sequence is that of E3 SUMO-protein ligase RanBP2 from Drosophila melanogaster (Fruit fly).